The chain runs to 193 residues: Protein GrpE (193 aa).

The segment covering 1–22 (MDPKEKEKMAEELNVEETKDTA) has biased composition (basic and acidic residues). The interval 1–45 (MDPKEKEKMAEELNVEETKDTAEEQPQDDQAEEAAPLTHEEQLEK) is disordered. Acidic residues predominate over residues 23–32 (EEQPQDDQAE).

This sequence belongs to the GrpE family. In terms of assembly, homodimer.

The protein localises to the cytoplasm. Functionally, participates actively in the response to hyperosmotic and heat shock by preventing the aggregation of stress-denatured proteins, in association with DnaK and GrpE. It is the nucleotide exchange factor for DnaK and may function as a thermosensor. Unfolded proteins bind initially to DnaJ; upon interaction with the DnaJ-bound protein, DnaK hydrolyzes its bound ATP, resulting in the formation of a stable complex. GrpE releases ADP from DnaK; ATP binding to DnaK triggers the release of the substrate protein, thus completing the reaction cycle. Several rounds of ATP-dependent interactions between DnaJ, DnaK and GrpE are required for fully efficient folding. This Bacteroides thetaiotaomicron (strain ATCC 29148 / DSM 2079 / JCM 5827 / CCUG 10774 / NCTC 10582 / VPI-5482 / E50) protein is Protein GrpE.